The chain runs to 314 residues: tRNA dimethylallyltransferase (314 aa).

13 to 20 (GPTAVGKT) contributes to the ATP binding site. Substrate is bound at residue 15–20 (TAVGKT). An interaction with substrate tRNA region spans residues 38-41 (DSMQ).

The protein belongs to the IPP transferase family. As to quaternary structure, monomer. Mg(2+) serves as cofactor.

The enzyme catalyses adenosine(37) in tRNA + dimethylallyl diphosphate = N(6)-dimethylallyladenosine(37) in tRNA + diphosphate. Its function is as follows. Catalyzes the transfer of a dimethylallyl group onto the adenine at position 37 in tRNAs that read codons beginning with uridine, leading to the formation of N6-(dimethylallyl)adenosine (i(6)A). The polypeptide is tRNA dimethylallyltransferase (Bacillus licheniformis (strain ATCC 14580 / DSM 13 / JCM 2505 / CCUG 7422 / NBRC 12200 / NCIMB 9375 / NCTC 10341 / NRRL NRS-1264 / Gibson 46)).